Consider the following 805-residue polypeptide: MNAVGSPEGQELQKLGSGAWDNPAYSGPPSPHGTLRVCTISSTGPLQPQPKKPEDEPQETAYRTQVSSCCLHICQGIRGLWGTTLTENTAENRELYIKTTLRELLVYIVFLVDICLLTYGMTSSSAYYYTKVMSELFLHTPSDTGVSFQAISSMADFWDFAQGPLLDSLYWTKWYNNQSLGHGSHSFIYYENMLLGVPRLRQLKVRNDSCVVHEDFREDILSCYDVYSPDKEEQLPFGPFNGTAWTYHSQDELGGFSHWGRLTSYSGGGYYLDLPGSRQGSAEALRALQEGLWLDRGTRVVFIDFSVYNANINLFCVLRLVVEFPATGGAIPSWQIRTVKLIRYVSNWDFFIVGCEVIFCVFIFYYVVEEILELHIHRLRYLSSIWNILDLVVILLSIVAVGFHIFRTLEVNRLMGKLLQQPNTYADFEFLAFWQTQYNNMNAVNLFFAWIKIFKYISFNKTMTQLSSTLARCAKDILGFAVMFFIVFFAYAQLGYLLFGTQVENFSTFIKCIFTQFRIILGDFDYNAIDNANRILGPAYFVTYVFFVFFVLLNMFLAIINDTYSEVKEELAGQKDELQLSDLLKQGYNKTLLRLRLRKERVSDVQKVLQGGEQEIQFEDFTNTLRELGHAEHEITELTATFTKFDRDGNRILDEKEQEKMRQDLEEERVALNTEIEKLGRSIVSSPQGKSGPEAARAGGWVSGEEFYMLTRRVLQLETVLEGVVSQIDAVGSKLKMLERKGWLAPSPGVKEQAIWKHPQPAPAVTPDPWGVQGGQESEVPYKREEEALEERRLSRGEIPTLQRS.

The segment at 1–59 (MNAVGSPEGQELQKLGSGAWDNPAYSGPPSPHGTLRVCTISSTGPLQPQPKKPEDEPQE) is disordered. At 1–103 (MNAVGSPEGQ…ELYIKTTLRE (103 aa)) the chain is on the cytoplasmic side. Cys-38 carries the S-palmitoyl cysteine lipid modification. A helical transmembrane segment spans residues 104 to 124 (LLVYIVFLVDICLLTYGMTSS). The Extracellular portion of the chain corresponds to 125 to 356 (SAYYYTKVMS…NWDFFIVGCE (232 aa)). Asn-177 and Asn-207 each carry an N-linked (GlcNAc...) asparagine glycan. An intrachain disulfide couples Cys-210 to Cys-223. N-linked (GlcNAc...) asparagine glycosylation is present at Asn-241. A helical membrane pass occupies residues 357–376 (VIFCVFIFYYVVEEILELHI). Ca(2+) contacts are provided by Glu-370 and Glu-373. Residues 377 to 384 (HRLRYLSS) lie on the Cytoplasmic side of the membrane. The helical transmembrane segment at 385–405 (IWNILDLVVILLSIVAVGFHI) threads the bilayer. 2 residues coordinate Ca(2+): Asn-387 and Asp-390. The Extracellular segment spans residues 406-433 (FRTLEVNRLMGKLLQQPNTYADFEFLAF). Residues 434 to 454 (WQTQYNNMNAVNLFFAWIKIF) form a helical membrane-spanning segment. Residues 455–479 (KYISFNKTMTQLSSTLARCAKDILG) lie on the Cytoplasmic side of the membrane. Residues 480 to 499 (FAVMFFIVFFAYAQLGYLLF) form a helical membrane-spanning segment. At 500-511 (GTQVENFSTFIK) the chain is on the extracellular side. A glycan (N-linked (GlcNAc...) asparagine) is linked at Asn-505. The pore-forming intramembrane region spans 512 to 526 (CIFTQFRIILGDFDY). At 527-536 (NAIDNANRIL) the chain is on the extracellular side. The helical transmembrane segment at 537 to 557 (GPAYFVTYVFFVFFVLLNMFL) threads the bilayer. At 558–805 (AIINDTYSEV…RGEIPTLQRS (248 aa)) the chain is on the cytoplasmic side. Residues 633 to 668 (HEITELTATFTKFDRDGNRILDEKEQEKMRQDLEEE) enclose the EF-hand domain. Coiled-coil stretches lie at residues 650–686 (NRIL…IVSS) and 700–740 (GWVS…MLER). A required for homooligomerization region spans residues 704-763 (GEEFYMLTRRVLQLETVLEGVVSQIDAVGSKLKMLERKGWLAPSPGVKEQAIWKHPQPAP). Positions 759–805 (PQPAPAVTPDPWGVQGGQESEVPYKREEEALEERRLSRGEIPTLQRS) are disordered. Basic and acidic residues predominate over residues 780–796 (VPYKREEEALEERRLSR).

Belongs to the polycystin family. In terms of assembly, oligomer. Functional PKD2L1 homotetramer can be formed either through C-terminal trimerization followed by N-terminal dimerization of a fourth subunit with a subunit in the trimer or through dimerization followed by trimerization. Heterotetramer with either PKD1L1, PKD1L3 or PKD1; the heterotetrameric complex contains three PKD1L2 chains plus one chain from another family member. Interacts with PKD1L1, forming a ciliary calcium channel. Interacts with PKD1L3, forming a cation channel that is activated by low extracellular pH. Interacts with PKD1; this heteromeric functional cation channels is opened by hypo-osmotic stimulation. Interacts with RACK1; inhibits the channel activity possibly by impairing localization to the cell membrane. Post-translationally, palmitoylation is important for expression at the cell membrane and for channel activity. In terms of tissue distribution, detected in taste bud cells in fungiform papillae (at protein level). Ubiquitous. Expressed in adult heart, skeletal muscle, brain, spleen, testis, retina and liver. Isoform 4 appears to be expressed only in transformed lymphoblasts.

It is found in the cell projection. Its subcellular location is the cilium membrane. The protein resides in the cell membrane. The protein localises to the cytoplasmic vesicle. It catalyses the reaction Ca(2+)(in) = Ca(2+)(out). The enzyme catalyses Na(+)(in) = Na(+)(out). It carries out the reaction K(+)(in) = K(+)(out). The catalysed reaction is Mg(2+)(in) = Mg(2+)(out). The non-selective cation channel is gated following an off-response property by acid: gated open after the removal of acid stimulus, but not during acid application. Channel activity is inhibited by phosphatidylinositol-4,5-bisphosphate (PIP2). Non-selective cation channel activity is substantially increased when either the extracellular or intracellular calcium-ion concentration is raised. Regulation of non-selective cation channel activity by external calcium is bimodal, first sensitizing and subsequently inactivating the current. Functionally, homotetrameric, non-selective cation channel that is permeable to sodium, potassium, magnesium and calcium. Also forms functionnal heteromeric channels with PKD1, PKD1L1 and PKD1L3. Pore-forming subunit of a heterotetrameric, non-selective cation channel, formed by PKD1L2 and PKD1L3, that is permeable to sodium, potassium, magnesium and calcium and which may act as a sour taste receptor in gustatory cells; however, its contribution to sour taste perception is unclear in vivo and may be indirect. The homomeric and heteromeric channels formed by PKD1L2 and PKD1L3 are activated by low pH and Ca(2+), but opens only when the extracellular pH rises again and after the removal of acid stimulus. Pore-forming subunit of a calcium-permeant ion channel formed by PKD1L2 and PKD1L1 in primary cilia, where it controls cilium calcium concentration, without affecting cytoplasmic calcium concentration, and regulates sonic hedgehog/SHH signaling and GLI2 transcription. The PKD1L1:PKD2L1 complex channel is mechanosensitive only at high pressures and is highly temperature sensitive. Pore-forming subunit of a calcium-permeant ion channel formed by PKD1L2 and PKD1 that produces a transient increase in intracellular calcium concentration upon hypo-osmotic stimulation (200 mOsm). May play a role in the perception of carbonation taste. May play a role in the sensory perception of water, via a mechanism that activates the channel in response to dilution of salivary bicarbonate and changes in salivary pH. This Homo sapiens (Human) protein is Polycystin-2-like protein 1.